A 286-amino-acid chain; its full sequence is Putative type II secretion system L-type protein YghE (286 aa).

The helical transmembrane segment at 136–156 threads the bilayer; it reads VMILPILLILVALAVERGVTL.

This sequence belongs to the GSP L family.

It localises to the cell inner membrane. Functionally, involved in a type II secretion system (T2SS, formerly general secretion pathway, GSP) for the export of folded proteins across the outer membrane. This chain is Putative type II secretion system L-type protein YghE, found in Escherichia coli (strain K12).